The following is a 171-amino-acid chain: Photosystem I assembly protein Ycf3 (171 aa).

3 TPR repeats span residues 33–66, 70–103, and 118–151; these read AFSYYRYGMSAQSSGDYAEALENYYEALKLEEDP, SYILYNIGLIYGNNGDYSKSLDYYHQALDLNSRL, and GTKSSEKKEFEVAQNNFDKAASYWKKAIRLAPNN.

The protein belongs to the Ycf3 family.

The protein resides in the plastid. The protein localises to the chloroplast thylakoid membrane. Functionally, essential for the assembly of the photosystem I (PSI) complex. May act as a chaperone-like factor to guide the assembly of the PSI subunits. The protein is Photosystem I assembly protein Ycf3 of Emiliania huxleyi (Coccolithophore).